Reading from the N-terminus, the 156-residue chain is Aspercryptin biosynthesis cluster protein B (156 aa).

Residues 1–39 form the signal peptide; sequence MRMANRIGAGRKSALQLSHLRTRLTSSAAAVATAPTLDP.

Belongs to the YciI family.

It participates in secondary metabolite biosynthesis. Functionally, part of the gene cluster that mediates the biosynthesis of aspercryptins, linear lipopeptides built from six amino acids including 2 highly unusual and nonproteogenic amino acids, 2-amino-octanoic acid (2aoa) and 2-amino-dodecanol (2adol). The core structure of aspercryptins is as follows: Ser/Ala-Thr-Ile/Val-2aoa-Aasn-2adol. The first step of aspercryptin biosynthesis is the generation of the fatty acid precursors, octanoic and dodecanoic acids, by the FAS subunits atnF and atnM. The fatty acid precursors are likely transformed into the corresponding alpha-amino fatty acids in three steps. First, they are hydroxylated by the cytochrome P450 monooxygenase atnE, then oxidized to the corresponding alpha-keto acids by the NAD(P)-dependent oxidoreductase atnD, and finally converted to the alpha-amino fatty acids by the PLP-dependent aminotransferases atnH or atnJ. the alpha-amino fatty acids, 2-amino-octanoic and 2-amino-dodecanoic acids, are recognized, activated, and covalently tethered to the NRPS atnA by its fourth and sixth adenylation domains. The second module of atnA is the Thr module and contains an epimerase (E) domain responsible for the epimerization of Thr to D-allo-Thr. Additionally, despite atnA having only one epimerase domain, the first amino acid of aspercryptin A1 is D-Ser, suggesting that serine is either loaded directly as D-Ser on the first module or that the epimerase domain in the threonine module epimerizes both L-Ser and L-Thr. After condensation of the hexapeptide of aspercryptin, the C-terminal reductase (TE) domain might be involved in the reductive release and production of the aldehyde hexapeptide. Further reduction would generate aspercryptins. The variety of aspercryptins produced reflects the flexibility of the atnA NRPS, allowing incorporation of alanine instead of serine, valine for isoleucine, and a C10 fatty amino alcohol instead of the C12 version. AtnB seems to be involved in the selectivity for Ile versus Val by the third module. Moreover, type B, C and D aspercryptins have an additional N-terminal cichorine, acetyl and propionyl group respectively. In Emericella nidulans (strain FGSC A4 / ATCC 38163 / CBS 112.46 / NRRL 194 / M139) (Aspergillus nidulans), this protein is Aspercryptin biosynthesis cluster protein B.